A 227-amino-acid polypeptide reads, in one-letter code: Cytochrome c oxidase subunit 2 (227 aa).

Residues 1–14 (MAYPLQLGLQDATS) lie on the Mitochondrial intermembrane side of the membrane. A helical membrane pass occupies residues 15–45 (PIMEELMNFHDHTLMIVFLISSLVLYVISSM). Topologically, residues 46–59 (LTTKLTHTSTMDAQ) are mitochondrial matrix. The helical transmembrane segment at 60 to 87 (EVETIWTILPAVILIMIALPSLRILYMM) threads the bilayer. Residues 88-227 (DEINNPVLTV…NFETWSVSMI (140 aa)) lie on the Mitochondrial intermembrane side of the membrane. Residues His-161, Cys-196, Glu-198, Cys-200, His-204, and Met-207 each contribute to the Cu cation site. Glu-198 contributes to the Mg(2+) binding site.

Belongs to the cytochrome c oxidase subunit 2 family. As to quaternary structure, component of the cytochrome c oxidase (complex IV, CIV), a multisubunit enzyme composed of 14 subunits. The complex is composed of a catalytic core of 3 subunits MT-CO1, MT-CO2 and MT-CO3, encoded in the mitochondrial DNA, and 11 supernumerary subunits COX4I, COX5A, COX5B, COX6A, COX6B, COX6C, COX7A, COX7B, COX7C, COX8 and NDUFA4, which are encoded in the nuclear genome. The complex exists as a monomer or a dimer and forms supercomplexes (SCs) in the inner mitochondrial membrane with NADH-ubiquinone oxidoreductase (complex I, CI) and ubiquinol-cytochrome c oxidoreductase (cytochrome b-c1 complex, complex III, CIII), resulting in different assemblies (supercomplex SCI(1)III(2)IV(1) and megacomplex MCI(2)III(2)IV(2)). Found in a complex with TMEM177, COA6, COX18, COX20, SCO1 and SCO2. Interacts with TMEM177 in a COX20-dependent manner. Interacts with COX20. Interacts with COX16. Cu cation is required as a cofactor.

The protein resides in the mitochondrion inner membrane. The enzyme catalyses 4 Fe(II)-[cytochrome c] + O2 + 8 H(+)(in) = 4 Fe(III)-[cytochrome c] + 2 H2O + 4 H(+)(out). Its function is as follows. Component of the cytochrome c oxidase, the last enzyme in the mitochondrial electron transport chain which drives oxidative phosphorylation. The respiratory chain contains 3 multisubunit complexes succinate dehydrogenase (complex II, CII), ubiquinol-cytochrome c oxidoreductase (cytochrome b-c1 complex, complex III, CIII) and cytochrome c oxidase (complex IV, CIV), that cooperate to transfer electrons derived from NADH and succinate to molecular oxygen, creating an electrochemical gradient over the inner membrane that drives transmembrane transport and the ATP synthase. Cytochrome c oxidase is the component of the respiratory chain that catalyzes the reduction of oxygen to water. Electrons originating from reduced cytochrome c in the intermembrane space (IMS) are transferred via the dinuclear copper A center (CU(A)) of subunit 2 and heme A of subunit 1 to the active site in subunit 1, a binuclear center (BNC) formed by heme A3 and copper B (CU(B)). The BNC reduces molecular oxygen to 2 water molecules using 4 electrons from cytochrome c in the IMS and 4 protons from the mitochondrial matrix. This chain is Cytochrome c oxidase subunit 2 (MT-CO2), found in Malacothrix typica (Long-eared mouse).